The chain runs to 220 residues: Type II restriction enzyme NspV (220 aa).

It catalyses the reaction Endonucleolytic cleavage of DNA to give specific double-stranded fragments with terminal 5'-phosphates.. A P subtype restriction enzyme that recognizes the double-stranded sequence 5'-TTCGAA-3' and cleaves after T-2. The sequence is that of Type II restriction enzyme NspV from Nostoc sp. (strain ATCC 29411 / PCC 7524).